The chain runs to 148 residues: Large ribosomal subunit protein uL13 (148 aa).

The protein belongs to the universal ribosomal protein uL13 family. As to quaternary structure, part of the 50S ribosomal subunit.

Functionally, this protein is one of the early assembly proteins of the 50S ribosomal subunit, although it is not seen to bind rRNA by itself. It is important during the early stages of 50S assembly. This chain is Large ribosomal subunit protein uL13, found in Lacticaseibacillus casei (strain BL23) (Lactobacillus casei).